Here is a 64-residue protein sequence, read N- to C-terminus: Large ribosomal subunit protein bL35 (64 aa).

This sequence belongs to the bacterial ribosomal protein bL35 family.

The polypeptide is Large ribosomal subunit protein bL35 (Ureaplasma parvum serovar 3 (strain ATCC 27815 / 27 / NCTC 11736)).